We begin with the raw amino-acid sequence, 677 residues long: Fermitin family homolog 1 (677 aa).

The region spanning 96-653 (MLRLRLPNAK…HEYIGGYIFL (558 aa)) is the FERM domain. Residues 157–181 (KEPVIEDILNLESSSTSSGSPVSPG) are disordered. Low complexity predominate over residues 169 to 181 (SSSTSSGSPVSPG). 2 positions are modified to phosphoserine: Ser-170 and Ser-179. The PH domain maps to 377-473 (KLFRPKKLML…WMAACILASK (97 aa)).

This sequence belongs to the kindlin family. In terms of assembly, interacts with the cytoplasmic domain of integrins ITGB1 and ITGB3.

Its subcellular location is the cytoplasm. It localises to the cytoskeleton. The protein localises to the cell junction. It is found in the focal adhesion. The protein resides in the cell projection. Its subcellular location is the ruffle membrane. Its function is as follows. Involved in cell adhesion. Contributes to integrin activation. When coexpressed with talin, potentiates activation of ITGA2B. Required for normal keratinocyte proliferation. Required for normal polarization of basal keratinocytes in skin, and for normal cell shape. Required for normal adhesion of keratinocytes to fibronectin and laminin, and for normal keratinocyte migration to wound sites. This is Fermitin family homolog 1 (Fermt1) from Mus musculus (Mouse).